Reading from the N-terminus, the 184-residue chain is ATP synthase subunit b, chloroplastic (184 aa).

A helical membrane pass occupies residues 27–49 (LATNPINLSVVLGVLIFFGKGVL).

The protein belongs to the ATPase B chain family. In terms of assembly, F-type ATPases have 2 components, F(1) - the catalytic core - and F(0) - the membrane proton channel. F(1) has five subunits: alpha(3), beta(3), gamma(1), delta(1), epsilon(1). F(0) has four main subunits: a(1), b(1), b'(1) and c(10-14). The alpha and beta chains form an alternating ring which encloses part of the gamma chain. F(1) is attached to F(0) by a central stalk formed by the gamma and epsilon chains, while a peripheral stalk is formed by the delta, b and b' chains.

It localises to the plastid. The protein resides in the chloroplast thylakoid membrane. Functionally, f(1)F(0) ATP synthase produces ATP from ADP in the presence of a proton or sodium gradient. F-type ATPases consist of two structural domains, F(1) containing the extramembraneous catalytic core and F(0) containing the membrane proton channel, linked together by a central stalk and a peripheral stalk. During catalysis, ATP synthesis in the catalytic domain of F(1) is coupled via a rotary mechanism of the central stalk subunits to proton translocation. Its function is as follows. Component of the F(0) channel, it forms part of the peripheral stalk, linking F(1) to F(0). This Oenothera argillicola (Appalachian evening primrose) protein is ATP synthase subunit b, chloroplastic.